A 701-amino-acid chain; its full sequence is Glycine--tRNA ligase beta subunit (701 aa).

This sequence belongs to the class-II aminoacyl-tRNA synthetase family. Tetramer of two alpha and two beta subunits.

It localises to the cytoplasm. The catalysed reaction is tRNA(Gly) + glycine + ATP = glycyl-tRNA(Gly) + AMP + diphosphate. The sequence is that of Glycine--tRNA ligase beta subunit from Nitratidesulfovibrio vulgaris (strain DSM 19637 / Miyazaki F) (Desulfovibrio vulgaris).